Reading from the N-terminus, the 221-residue chain is 7-cyano-7-deazaguanine synthase (221 aa).

ATP is bound at residue 10 to 20 (FSGGQDSTTCL). Residues cysteine 186, cysteine 195, cysteine 198, and cysteine 201 each coordinate Zn(2+).

It belongs to the QueC family. Homodimer. Requires Zn(2+) as cofactor.

It catalyses the reaction 7-carboxy-7-deazaguanine + NH4(+) + ATP = 7-cyano-7-deazaguanine + ADP + phosphate + H2O + H(+). It participates in purine metabolism; 7-cyano-7-deazaguanine biosynthesis. Its function is as follows. Catalyzes the ATP-dependent conversion of 7-carboxy-7-deazaguanine (CDG) to 7-cyano-7-deazaguanine (preQ(0)). The protein is 7-cyano-7-deazaguanine synthase of Anoxybacillus flavithermus (strain DSM 21510 / WK1).